A 466-amino-acid chain; its full sequence is Cysteine--tRNA ligase (466 aa).

C33 serves as a coordination point for Zn(2+). The 'HIGH' region signature appears at 35–45 (PTVYDYAHIGN). Residues C221, H246, and E250 each contribute to the Zn(2+) site. The 'KMSKS' region signature appears at 279–283 (KMSKS). Position 282 (K282) interacts with ATP.

This sequence belongs to the class-I aminoacyl-tRNA synthetase family. In terms of assembly, monomer. Zn(2+) is required as a cofactor.

The protein resides in the cytoplasm. The enzyme catalyses tRNA(Cys) + L-cysteine + ATP = L-cysteinyl-tRNA(Cys) + AMP + diphosphate. The chain is Cysteine--tRNA ligase from Rhizobium meliloti (strain 1021) (Ensifer meliloti).